The primary structure comprises 146 residues: Lysozyme C-2 (146 aa).

The signal sequence occupies residues 1–18; the sequence is MKTLLVLALLLLSVSVQA. One can recognise a C-type lysozyme domain in the interval 19–146; the sequence is KVYDRCEFAR…VSQYIRGCKL (128 aa). 4 disulfides stabilise this stretch: Cys24–Cys144, Cys48–Cys132, Cys81–Cys97, and Cys93–Cys111. Residues Glu53 and Asp69 contribute to the active site.

It belongs to the glycosyl hydrolase 22 family. Monomer.

It localises to the secreted. The enzyme catalyses Hydrolysis of (1-&gt;4)-beta-linkages between N-acetylmuramic acid and N-acetyl-D-glucosamine residues in a peptidoglycan and between N-acetyl-D-glucosamine residues in chitodextrins.. Its function is as follows. Lysozymes have primarily a bacteriolytic function; those in tissues and body fluids are associated with the monocyte-macrophage system and enhance the activity of immunoagents. In Sus scrofa (Pig), this protein is Lysozyme C-2.